A 748-amino-acid polypeptide reads, in one-letter code: Methylmalonyl-CoA mutase, mitochondrial (748 aa).

The N-terminal 30 residues, 1-30, are a transit peptide targeting the mitochondrion; sequence MLRAKNQLFLLSPHYLKQLNIPSASRWKRL. Gln-48 is a malonyl-CoA binding site. At Lys-87 the chain carries N6-acetyllysine. Malonyl-CoA contacts are provided by residues 94–97 and 104–108; these read YPTM and TIRQY. Lys-210 is subject to N6-acetyllysine. Malonyl-CoA-binding positions include 214–216, Arg-226, Lys-253, His-263, and 302–304; these read TIQ and RLS. An N6-acetyllysine modification is found at Lys-333. Lys-341 carries the post-translational modification N6-succinyllysine. The residue at position 479 (Ser-479) is a Phosphoserine. Lys-593 bears the N6-succinyllysine mark. Lys-600 bears the N6-acetyllysine mark. The B12-binding domain maps to 612-744; it reads RPRLLVAKMG…DDIEKCLAEK (133 aa). His-625 contributes to the adenosylcob(III)alamin binding site.

It belongs to the methylmalonyl-CoA mutase family. As to quaternary structure, homodimer. Interacts (the apoenzyme form) with MMAA; the interaction is GTP dependent. Adenosylcob(III)alamin is required as a cofactor.

The protein resides in the mitochondrion matrix. It localises to the mitochondrion. It is found in the cytoplasm. It carries out the reaction (R)-methylmalonyl-CoA = succinyl-CoA. With respect to regulation, inhibited by itaconyl-CoA, a metabolite that inactivates the coenzyme B12 cofactor. Functionally, catalyzes the reversible isomerization of methylmalonyl-CoA (MMCoA) (generated from branched-chain amino acid metabolism and degradation of dietary odd chain fatty acids and cholesterol) to succinyl-CoA (3-carboxypropionyl-CoA), a key intermediate of the tricarboxylic acid cycle. The polypeptide is Methylmalonyl-CoA mutase, mitochondrial (Mmut) (Mus musculus (Mouse)).